A 94-amino-acid polypeptide reads, in one-letter code: Large ribosomal subunit protein eL42 (94 aa).

Zn(2+) contacts are provided by Cys11, Cys14, Cys71, and Cys74. The C4-type zinc finger occupies 11–74; it reads CPFCKKHTIH…LDLRFRCTEC (64 aa).

This sequence belongs to the eukaryotic ribosomal protein eL42 family. In terms of assembly, part of the 50S ribosomal subunit. Zn(2+) serves as cofactor.

Functionally, binds to the 23S rRNA. The polypeptide is Large ribosomal subunit protein eL42 (Pyrococcus furiosus (strain ATCC 43587 / DSM 3638 / JCM 8422 / Vc1)).